The sequence spans 162 residues: uncharacterized protein (162 aa).

A signal peptide spans 1 to 24 (MCKRFKFLLAVSALFISITVVLAG). Cys-25 carries N-palmitoyl cysteine lipidation. Cys-25 is lipidated: S-diacylglycerol cysteine.

Its subcellular location is the cell membrane. This is an uncharacterized protein from Bacillus anthracis.